We begin with the raw amino-acid sequence, 345 residues long: N-acetyl-gamma-glutamyl-phosphate reductase (345 aa).

Residue Cys149 is part of the active site.

The protein belongs to the NAGSA dehydrogenase family. Type 1 subfamily.

The protein localises to the cytoplasm. The catalysed reaction is N-acetyl-L-glutamate 5-semialdehyde + phosphate + NADP(+) = N-acetyl-L-glutamyl 5-phosphate + NADPH + H(+). It functions in the pathway amino-acid biosynthesis; L-arginine biosynthesis; N(2)-acetyl-L-ornithine from L-glutamate: step 3/4. In terms of biological role, catalyzes the NADPH-dependent reduction of N-acetyl-5-glutamyl phosphate to yield N-acetyl-L-glutamate 5-semialdehyde. The sequence is that of N-acetyl-gamma-glutamyl-phosphate reductase from Janthinobacterium sp. (strain Marseille) (Minibacterium massiliensis).